Consider the following 477-residue polypeptide: Delayed-rectifier potassium channel regulatory subunit KCNS2 (477 aa).

Over 1–184 (MTRQSLWDLS…LALDNPGYSV (184 aa)) the chain is Cytoplasmic. Residues 185-206 (LSRVFSVLSILVVLGSIITMCL) traverse the membrane as a helical segment. At 207–225 (NSLPDFQIPDSQGNPGEDP) the chain is on the extracellular side. Residues 226–248 (RFEIVEHFGIAWFTFELVARFAV) form a helical membrane-spanning segment. Residues 249–259 (APDFLKFFKNA) lie on the Cytoplasmic side of the membrane. Residues 260-280 (LNLIDLMSIVPFYITLVVNLV) traverse the membrane as a helical segment. Over 281–290 (VESSPTLANL) the chain is Extracellular. The chain crosses the membrane as a helical; Voltage-sensor span at residues 291 to 311 (GRVAQVLRLMRIFRILKLARH). At 312-326 (STGLRSLGATLKYSY) the chain is on the cytoplasmic side. The helical transmembrane segment at 327 to 348 (KEVGLLLLYLSVGISIFSVVAY) threads the bilayer. Topologically, residues 349–361 (TIEKEENEGLATI) are extracellular. The helical intramembrane region spans 362–373 (PACWWWATVSMT). Positions 374 to 379 (TVGYGD) match the Selectivity filter motif. An intramembrane segment occupies 374-381 (TVGYGDVV). Topologically, residues 382–388 (PGTTAGK) are extracellular. Residues 389 to 417 (LTASACILAGILVVVLPITLIFNKFSHFY) traverse the membrane as a helical segment. The Cytoplasmic portion of the chain corresponds to 418-477 (RRQKQLESAMRSCDFGDGMKEVPSVNLRDYYAHKVKSLMASLTNMSRSSPSELSLDDSLH).

This sequence belongs to the potassium channel family. S (TC 1.A.1.2) subfamily. Kv9.2/KCNS2 sub-subfamily. Heterotetramer with KCNB1 and KCNB2. Does not form homomultimers. Detected in brain, lung and in pulmonary arteries.

The protein localises to the cell membrane. Its function is as follows. Potassium channel regulatory subunit that modulate the delayed rectifier voltage-gated potassium channel activity of KCNB1 and KCNB2 by altering their kinetics, expression levels, and shifting the half-inactivation potential to more polarized values. While it does not form functional channels on its own, it can form functional heterotetrameric channels with KCNB1 and KCNB2. Each regulatory subunit has unique regulatory properties that can lead to extensive inhibition, significant changes in kinetics, and/or substantial shifts in the voltage dependencies of the inactivation process. This chain is Delayed-rectifier potassium channel regulatory subunit KCNS2, found in Rattus norvegicus (Rat).